The sequence spans 217 residues: MSPVRPRFYTPREVSRHCIVSDLWVSYLGRVYDLSPLLELHKGDVLLKPIIEAAGRDISHWFNPKTGDVKTHIDPQTGCLKYYTPQGRFLHTAPSFPCSGWDNDFGRPWWKESTYQIGILSSKTKFIRIINTLTSQEQALEVCSEETIREILGRYLPYNGHAGSYTWKFCGLPLDMDKTLQENGVWDEDEEFEELKIASDLYTPSIHLYFNDDLTEL.

The Cytochrome b5 heme-binding domain occupies 6–72 (PRFYTPREVS…NPKTGDVKTH (67 aa)). Residues histidine 41 and histidine 72 each contribute to the heme site.

Belongs to the cytochrome b5 family.

It is found in the cytoplasm. The protein localises to the cytoskeleton. It localises to the cilium axoneme. In terms of biological role, radial spoke stalk protein that binds heme under oxidizing conditions. Required for the coordinated beating of multiple cilia maybe by functioning in a redox signaling pathway. The protein is Cytochrome b5 domain-containing protein 1 (cyb5d1) of Xenopus tropicalis (Western clawed frog).